Consider the following 427-residue polypeptide: Transcription factor MYB98 (427 aa).

A Nuclear localization signal 1 motif is present at residues 195–202; the sequence is TRKLSSSS. HTH myb-type domains follow at residues 212-267 and 268-318; these read KSTL…RPDI and KKET…RRQF. 2 consecutive DNA-binding regions (H-T-H motif) follow at residues 240–263 and 291–314; these read WSHI…HNHL and WAEI…NATK. A Nuclear localization signal 2 motif is present at residues 361-368; sequence NKKKDVVV.

As to expression, expressed at high levels in the synergid cells of the female gametophyte, and at lower levels in the endosperm of young seeds and the trichomes of young leaves and sepals.

Its subcellular location is the nucleus. Transcription factor that binds to the motif 5'-GTAACNT-3' in the promoter of target genes (e.g. DD11 and DD18) and promotes their expression within synergid cells (e.g. in the filiform apparatus) in ovules. Required for the formation of the filiform apparatus during synergid cell differentiation in the female gametophyte. Involved in pollen tube guidance to the micropyle. The protein is Transcription factor MYB98 of Arabidopsis thaliana (Mouse-ear cress).